The chain runs to 475 residues: D-lactate dehydrogenase (475 aa).

Residues 43-222 (YGKARPEVLV…TELTLKVIPA (180 aa)) form the FAD-binding PCMH-type domain.

It belongs to the FAD-binding oxidoreductase/transferase type 4 family. Requires FAD as cofactor. Zn(2+) serves as cofactor.

It catalyses the reaction (R)-lactate + A = pyruvate + AH2. In terms of biological role, catalyzes the dehydrogenation of (R)-lactate (D-lactate) to pyruvate. Active in vitro with the artificial electron acceptor 2,6-dichlorophenolindophenol (DCPIP), but not with NAD, NADP, or cytochrome c. Also displays a very low oxidase activity in vitro on D-lactate and L-lactate with O2 as the electron acceptor, but this activity is most likely not physiological. In Anaerostipes hadrus, this protein is D-lactate dehydrogenase.